The chain runs to 230 residues: Orotidine 5'-phosphate decarboxylase (230 aa).

Substrate is bound by residues Asp11, Lys34, 61 to 70 (DLKLHDIPNT), Thr117, Arg179, Gln188, Gly208, and Arg209. Lys63 functions as the Proton donor in the catalytic mechanism.

It belongs to the OMP decarboxylase family. Type 1 subfamily. Homodimer.

It carries out the reaction orotidine 5'-phosphate + H(+) = UMP + CO2. Its pathway is pyrimidine metabolism; UMP biosynthesis via de novo pathway; UMP from orotate: step 2/2. Its function is as follows. Catalyzes the decarboxylation of orotidine 5'-monophosphate (OMP) to uridine 5'-monophosphate (UMP). The protein is Orotidine 5'-phosphate decarboxylase of Streptococcus mutans serotype c (strain ATCC 700610 / UA159).